A 196-amino-acid chain; its full sequence is MIDFDGYRPNVGIVICNRKGQVLWAKRCGQNSWQFPQGGINDNESAEQAMYRELHEEVGLQPKDVRLLYVSKHWLRYKLPKRLLRYDSKPMCIGQKQRWFLLQLVSDEKNINMQTTKSPEFDGWRWVSFWYPVRQVVSFKRDVYRKVMKEFASILFTDNPLIFSASREANSLHYSANKKYSQTKYTKRHFYKSRGQ.

Positions 6–149 (GYRPNVGIVI…KRDVYRKVMK (144 aa)) constitute a Nudix hydrolase domain. Residues 38–59 (GGINDNESAEQAMYRELHEEVG) carry the Nudix box motif.

This sequence belongs to the Nudix hydrolase family. RppH subfamily. A divalent metal cation serves as cofactor.

Accelerates the degradation of transcripts by removing pyrophosphate from the 5'-end of triphosphorylated RNA, leading to a more labile monophosphorylated state that can stimulate subsequent ribonuclease cleavage. The chain is RNA pyrophosphohydrolase from Haemophilus influenzae (strain ATCC 51907 / DSM 11121 / KW20 / Rd).